The sequence spans 399 residues: 3-sulfinopropanoyl-CoA desulfinase (399 aa).

FAD contacts are provided by residues Ile121–Ser124, Ser130, and Tyr153–Thr156. Residue Tyr244–Asn245 participates in substrate binding. FAD contacts are provided by residues Arg273, Gln340, Ser344, Gly367 to Gln371, and Gln388.

This sequence belongs to the acyl-CoA dehydrogenase family. As to quaternary structure, homotrimer or homotetramer. The cofactor is FAD.

The catalysed reaction is 3-sulfinopropanoyl-CoA + H2O = propanoyl-CoA + sulfite + H(+). Functionally, catalyzes the conversion 3-sulfinopropanoyl-CoA (3SP-CoA) to propanoyl-CoA by abstraction of sulfite. Does not show dehydrogenase activity. The sequence is that of 3-sulfinopropanoyl-CoA desulfinase from Variovorax paradoxus.